The sequence spans 396 residues: Transcription factor E2FC (396 aa).

Residues 34 to 48 (PRYSSLTPSSTNRPF) show a composition bias toward polar residues. The tract at residues 34-57 (PRYSSLTPSSTNRPFSVSQSLPNS) is disordered. A DNA-binding region spans residues 155–220 (RYDSSLGLLT…TTKNHIRWKG (66 aa)). Residues 226-268 (QKDLGDQISRLKSEVESMQSEESRLDDLIRERQEALRSLEEDD) are a coiled coil. Positions 236–264 (LKSEVESMQSEESRLDDLIRERQEALRSL) are leucine-zipper. The segment at 376–391 (DYWFESDAEVSLTDLW) is retinoblastoma protein binding.

It belongs to the E2F/DP family. In terms of assembly, heterodimer with DP proteins. Interacts preferentially with DPB, but also with DPA. No interaction with DPB when phosphorylated. Interacts with SKP2A, CDKA-1 and maize retinoblastoma-related protein RBR1. Component of a DREAM-like complex which modulates a variety of developmentally regulated genes and of the mitotic genes in proliferating and differentiated cells. Interacts with MYB3R3 at later stages of leaves development. Phosphorylated by cyclin-dependent kinase. Phosphorylation is necessary to target E2FC for proteolysis. Expressed in meristematic areas, vascular tissues, apical part of the roots, cotyledons, upper region of the hypocotyls, trichomes, young flower buds and pollen grains.

Its subcellular location is the cytoplasm. Its function is as follows. Involved in transcriptional repression. May act by repressing E2F-regulated genes in mature differentiated cells, but is not an antagonist of E2FA. Restricts cell division and is involved in the coordination between cell proliferation and endoreduplication during development. May play a role during the transition from skotomorphogenesis to photomorphogenesis. Regulated by phosphorylation-dependent proteolysis via the protein-ubiquitin ligase SCF(SKP2A) complex. In Arabidopsis thaliana (Mouse-ear cress), this protein is Transcription factor E2FC (E2FC).